The sequence spans 581 residues: Zinc metalloproteinase nas-36 (581 aa).

Residues 1-95 (MKEIAHSQAY…FRGANEKGKR (95 aa)) constitute a propeptide that is removed on maturation. Asparagine 67 carries an N-linked (GlcNAc...) asparagine glycan. Positions 97–290 (AAEYDAKWFQ…IKLINEAYCK (194 aa)) constitute a Peptidase M12A domain. 5 cysteine pairs are disulfide-bonded: cysteine 137–cysteine 289, cysteine 159–cysteine 178, cysteine 293–cysteine 313, cysteine 315–cysteine 324, and cysteine 336–cysteine 364. Histidine 186 provides a ligand contact to Zn(2+). The active site involves glutamate 187. Zn(2+)-binding residues include histidine 190 and histidine 196. One can recognise an EGF-like domain in the interval 285–325 (NEAYCKGDCKEKNECKNGGYLNPSNCQSCLCPSGFGGSKCE). The CUB domain occupies 336 to 449 (CGGTLKAIID…TGFKLKFRKT (114 aa)). Asparagine 418 is a glycosylation site (N-linked (GlcNAc...) asparagine). The 50-residue stretch at 474 to 523 (NDIWSEWGEWSQCSRSCGACGIKSRLRICKTAQCSGKVQQFLTCNLQACP) folds into the TSP type-1 domain. Disulfide bonds link cysteine 486–cysteine 517, cysteine 490–cysteine 522, and cysteine 502–cysteine 507.

Requires Zn(2+) as cofactor.

The protein resides in the secreted. Its activity is regulated as follows. Inhibited by 1,10-phenanthroline. Its function is as follows. Metalloprotease. Involved in molting, a process during larval stages in which a new cuticle is formed and the old cuticle is shed. In Brugia malayi (Filarial nematode worm), this protein is Zinc metalloproteinase nas-36.